The following is a 314-amino-acid chain: MTSMVEIQNEIERVTALAVKYISENKDSLVVFVGQIDYNGYDAGKLLSILKEKAKGRDFGRDLCYLLVMRYTRGTGFVRDVRKKIKVAAGADTAYEIVTHYGVVQSVGDNADAITLGRLAALFPYVSMNIVKSVSTGAKLALDTSDLGTSGLDILLWDFVPQFINLDSVDAPYCNKKNTSNILFSLHLLQGALTTRKTMPDQKKKKDNLTTDFDLLKYTAELLVITCSAKNLTDNKKSTYRKKLVEPFRENEDYKADFWTALGKLSTGCLKKMKKDAQNYLKDRTTVLKLMVDNCSGTDDEAAKAIKDYLTVDD.

Met1 is subject to N-acetylmethionine; by host. Residues Tyr38, Tyr41, Arg118, Lys237, and Ser266 each coordinate RNA.

This sequence belongs to the tenuiviruses nucleocapsid protein family.

It localises to the virion. The protein resides in the host cytoplasm. Functionally, encapsidates the genome, protecting it from nucleases. The encapsidated genomic RNA is termed the nucleocapsid (NC), and serves as template for viral transcription and replication. The polypeptide is Nucleoprotein (Wheat yellow head virus (WYHV)).